The primary structure comprises 553 residues: HTH-type transcriptional regulator SgrR (553 aa).

The HTH marR-type domain occupies 1-113; the sequence is MSTSRLQQQF…RQMLLSQLGR (113 aa). Residues 26–49 constitute a DNA-binding region (H-T-H motif); the sequence is LQALAEVLNCSRRHVRSLLGKMQH. The solute-binding stretch occupies residues 163-494; that stretch reads ELEPDLSHHW…EELHQDIESW (332 aa).

Functionally, activates the small RNA gene sgrS under glucose-phosphate stress conditions as well as yfdZ. Represses its own transcription under both stress and non-stress conditions. Might act as a sensor of the intracellular accumulation of phosphoglucose by binding these molecules in its C-terminal solute-binding domain. In Yersinia pestis bv. Antiqua (strain Antiqua), this protein is HTH-type transcriptional regulator SgrR.